The chain runs to 146 residues: Large ribosomal subunit protein uL15 (146 aa).

Over residues 1 to 18 (MKLHELKPTPGSRHERNR) the composition is skewed to basic and acidic residues. Residues 1-69 (MKLHELKPTP…RLPKRGFNNP (69 aa)) are disordered. Residues 42–52 (SGGGVRPGFEG) show a composition bias toward gly residues.

The protein belongs to the universal ribosomal protein uL15 family. Part of the 50S ribosomal subunit.

Binds to the 23S rRNA. The protein is Large ribosomal subunit protein uL15 of Exiguobacterium sp. (strain ATCC BAA-1283 / AT1b).